A 72-amino-acid chain; its full sequence is UPF0352 protein Shal_2512 (72 aa).

The protein belongs to the UPF0352 family.

In Shewanella halifaxensis (strain HAW-EB4), this protein is UPF0352 protein Shal_2512.